The following is a 541-amino-acid chain: MASMGTLAFDEYGRPFLIIKDQDRKSRLMGLEALKSHIMAAKAVANTMRTSLGPNGLDKMMVDKDGDVTVTNDGATILSMMDVDHQIAKLMVELSKSQDDEIGDGTTGVVVLAGALLEEAEQLLDRGIHPIRIADGYEQAARVAIEHLDKISDSVLVDIKDTEPLIQTAKTTLGSKVVNSCHRQMAEIAVNAVLTVADMERRDVDFELIKVEGKVGGRLEDTKLIKGVIVDKDFSHPRMPKKVEDAKIAILTCPFEPPKPKTKHKLDVTSVEDYKALQKYEKEKFEEMIQQIKETGANLAICQWGFDDEANHLLLQNNLPAVRWVGGPEIELIAIATGGRIVPRFSELTAEKLGFAGLVQEISFGTTKDKMLVIEQCKNSRAVTIFIRGGNKMIIEEAKRSLHDALCVIRNLIRDNRVVYGGGAAETSCALAVSQEADKCPTLEQYAMRAFADALEVIPMALSENSGMNPIQTMTEVRARQVKEMNPALGIDCLHKGTNDMKQQHVIETLIGKKQQISLATQMVRMILKIDDIRKPGESEE.

N-acetylalanine is present on Ala2. A Glycyl lysine isopeptide (Lys-Gly) (interchain with G-Cter in SUMO2) cross-link involves residue Lys20. Ser26 is modified (phosphoserine). Position 53 (Gly53) interacts with ADP. Gly53 contributes to the ATP binding site. Position 104 (Asp104) interacts with Mg(2+). ADP contacts are provided by Gly105, Thr106, Thr107, and Ser175. Residues Thr106 and Thr107 each coordinate ATP. Glycyl lysine isopeptide (Lys-Gly) (interchain with G-Cter in SUMO2) cross-links involve residues Lys210, Lys214, Lys265, Lys275, and Lys279. Ser346 carries the post-translational modification Phosphoserine. Lys392 is covalently cross-linked (Glycyl lysine isopeptide (Lys-Gly) (interchain with G-Cter in SUMO2)). ADP is bound by residues Gly422, Asp492, Glu508, and Lys513. Gly422 is an ATP binding site. A Phosphoserine modification is found at Ser539.

This sequence belongs to the TCP-1 chaperonin family. Component of the chaperonin-containing T-complex (TRiC), a hexadecamer composed of two identical back-to-back stacked rings enclosing a protein folding chamber. Each ring is made up of eight different subunits: TCP1/CCT1, CCT2, CCT3, CCT4, CCT5, CCT6A/CCT6, CCT7, CCT8. Interacts with PACRG. Interacts with DNAAF4. Interacts with DLEC1. Interacts with SPMAP2. Post-translationally, ubiquitinated by the DCX(DCAF12) complex specifically recognizes the diglutamate (Glu-Glu) at the C-terminus, leading to its degradation.

The protein localises to the cytoplasm. It localises to the cytoskeleton. The protein resides in the microtubule organizing center. Its subcellular location is the centrosome. It catalyses the reaction ATP + H2O = ADP + phosphate + H(+). In terms of biological role, component of the chaperonin-containing T-complex (TRiC), a molecular chaperone complex that assists the folding of actin, tubulin and other proteins upon ATP hydrolysis. The TRiC complex mediates the folding of WRAP53/TCAB1, thereby regulating telomere maintenance. As part of the TRiC complex may play a role in the assembly of BBSome, a complex involved in ciliogenesis regulating transports vesicles to the cilia. This Pongo abelii (Sumatran orangutan) protein is T-complex protein 1 subunit epsilon (CCT5).